Consider the following 238-residue polypeptide: Dolichyldiphosphatase 1 (238 aa).

Helical transmembrane passes span 33-53 (LAYL…LIIF), 100-120 (PSSH…FLYL), 130-150 (FLDL…AFLV), and 162-182 (WSQV…WFIF).

It belongs to the dolichyldiphosphatase family.

The protein resides in the endoplasmic reticulum membrane. The enzyme catalyses a di-trans,poly-cis-dolichyl diphosphate + H2O = a di-trans,poly-cis-dolichyl phosphate + phosphate + H(+). The protein operates within protein modification; protein glycosylation. Its function is as follows. Required for efficient N-glycosylation. Necessary for maintaining optimal levels of dolichol-linked oligosaccharides. Hydrolyzes dolichyl pyrophosphate at a very high rate and dolichyl monophosphate at a much lower rate. Does not act on phosphatidate. This Plecturocebus moloch (Dusky titi monkey) protein is Dolichyldiphosphatase 1 (DOLPP1).